Consider the following 419-residue polypeptide: MPIFKKTLIVLSFIFLISILIYLNMYLFGTSTVGIYGVILITYLVIKLGLSFLYEPFKGKPHDYKVAAVIPSYNEDAESLLETLKSVLAQTYPLSEIYIVDDGSSNTDAIQLIEEYVNREVDICRNVIVHRSLVNKGKRHAQAWAFERSDADVFLTVDSDTYIYPNALEELLKSFNDETVYAATGHLNARNRQTNLLTRLTDIRYDNAFGVERAAQSLTGNILVCSGPLSIYRREVIIPNLERYKNQTFLGLPVSIGDDRCLTNYAIDLGRTVYQSTARCDTDVPFQLKSYLKQQNRWNKSFFKESIISVKKILSNPIVALWTIFEVVMFMMLIVAIGNLLFNQAIQLDLIKLFAFLSIIFIVALCRNVHYMIKHPASFLLSPLYGILHLFVLQPLKLYSLCTIKNTEWGTRKKVTIFK.

Transmembrane regions (helical) follow at residues 8–28, 33–53, 318–338, 345–365, and 376–396; these read LIVLSFIFLISILIYLNMYLF, VGIYGVILITYLVIKLGLSFL, IVALWTIFEVVMFMMLIVAIG, AIQLDLIKLFAFLSIIFIVAL, and PASFLLSPLYGILHLFVLQPL.

The protein belongs to the NodC/HAS family. The cofactor is Mg(2+).

Its subcellular location is the cell membrane. It carries out the reaction [hyaluronan](n) + UDP-N-acetyl-alpha-D-glucosamine = N-acetyl-beta-D-glucosaminyl-(1-&gt;4)-[hyaluronan](n) + UDP + H(+). It catalyses the reaction N-acetyl-beta-D-glucosaminyl-(1-&gt;4)-[hyaluronan](n) + UDP-alpha-D-glucuronate = [hyaluronan](n+1) + UDP + H(+). The protein operates within glycan biosynthesis; hyaluronan biosynthesis. In terms of biological role, glycosaminoglycan synthesis. The hyaluronic acid capsule is involved in the pathogenicity of group A Streptococci; it may be the major virulence determinant. The sequence is that of Hyaluronan synthase (hasA) from Streptococcus pyogenes serotype M1.